The primary structure comprises 1657 residues: Endoribonuclease Dicer homolog 4 (1657 aa).

Residues 1–14 (MGDAAAAAPAAAAA) show a composition bias toward low complexity. Positions 1–26 (MGDAAAAAPAAAAAGPSSTRGEPKDP) are disordered. The Helicase ATP-binding domain occupies 37-214 (LCKRAVEENI…SHSFTEKGGR (178 aa)). 50–57 (LGTGCGKT) serves as a coordination point for ATP. A DECH box motif is present at residues 157–160 (DECH). Positions 400 to 567 (NKFSVLINVL…TSNDMFDCLE (168 aa)) constitute a Helicase C-terminal domain. The Dicer dsRNA-binding fold domain maps to 585–675 (SVSLLHCYCD…LPGPGSRKNK (91 aa)). A PAZ domain is found at 856–978 (DVSVHASYSS…LPPELCSLKV (123 aa)). 2 consecutive RNase III domains span residues 1010–1173 (DVML…VEGG) and 1214–1358 (IAGL…LDSG). 3 residues coordinate Mg(2+): E1252, D1344, and E1347. The DRBM 1 domain maps to 1384–1451 (NPMRELRELC…AQETLSKLKN (68 aa)). Residues 1525–1556 (GSGKHDVNNGRNNQPKLATQSGRLPSEATEKS) form a disordered region. Polar residues predominate over residues 1533–1547 (NGRNNQPKLATQSGR). One can recognise a DRBM 2 domain in the interval 1569–1645 (TARSFLFELC…AQGALWCLKQ (77 aa)).

The protein belongs to the helicase family. Dicer subfamily. In terms of assembly, may interact with ARGONAUTE1 or PINHEAD through their common PAZ domains. Mg(2+) is required as a cofactor. Mn(2+) serves as cofactor. In terms of tissue distribution, expressed in roots, leaf blades, leaf sheaths, shoot apices and spikelets.

It localises to the nucleus. Functionally, involved in the RNA silencing pathway. Cleaves double-stranded RNA to produce small interfering RNAs (siRNAs) which target the selective destruction of complementary RNAs. Required for the production of 21 nucleotide siRNAs. Regulates shoot apical meristem (SAM) initiation and maintenance, leaf polarization and lemma polarity through the trans-acting siRNAS (ta-siRNAs) pathway, which probably modulate the expression of the ARF2, ARF3, ARF4, ARF14 and ARF15 genes. Can process endogenous 21 nucleotide siRNAs derived from an imperfect inverted repeat. May not be involved in microRNAs (miRNAs) production. This Oryza sativa subsp. japonica (Rice) protein is Endoribonuclease Dicer homolog 4 (DCL4).